We begin with the raw amino-acid sequence, 459 residues long: Palmitoyltransferase PFA4 (459 aa).

Residues 1-9 (MAARNWSRV) lie on the Cytoplasmic side of the membrane. The chain crosses the membrane as a helical span at residues 10–30 (WVGGTVILISFIAFSSQIFVI). The Lumenal portion of the chain corresponds to 31–37 (WPWYGRE). The helical transmembrane segment at 38–58 (ISLDLLKLLVPLNLAAFMIFW) threads the bilayer. Residues 59–138 (NYRLCVITSP…GNCVGFYNQG (80 aa)) are Cytoplasmic-facing. In terms of domain architecture, DHHC spans 95–145 (RYCKNCEHYKPPRAHHCRQCKTCWLKLDHHCPWIGNCVGFYNQGHFIRFLL). Residue cysteine 125 is the S-palmitoyl cysteine intermediate of the active site. Residues 139-159 (HFIRFLLWVDIGTTFHLIIMV) form a helical membrane-spanning segment. The Lumenal segment spans residues 160-177 (RRVLYIAEYYHQEPTLAD). Residues 178 to 198 (VLFLVFNFATCVPVWLCVGMF) traverse the membrane as a helical segment. Topologically, residues 199-459 (SIYHVYLACG…DTEEESGYAH (261 aa)) are cytoplasmic. Residues 278–379 (HTTQYFWPPQ…DYDHYDEGPM (102 aa)) form a disordered region. Residues 286–299 (PQDPSRLPNPPPIP) show a composition bias toward pro residues. The span at 310–322 (NGFNPNLQPTNSL) shows a compositional bias: polar residues. The segment covering 331–356 (HIDEDEHSHERDQYRHYSSGEERDND) has biased composition (basic and acidic residues).

The protein belongs to the DHHC palmitoyltransferase family. PFA4 subfamily.

The protein resides in the endoplasmic reticulum membrane. It catalyses the reaction L-cysteinyl-[protein] + hexadecanoyl-CoA = S-hexadecanoyl-L-cysteinyl-[protein] + CoA. Functionally, mediates the reversible addition of palmitate to target proteins, thereby regulating their membrane association and biological function. The polypeptide is Palmitoyltransferase PFA4 (Cryptococcus neoformans var. neoformans serotype D (strain B-3501A) (Filobasidiella neoformans)).